The primary structure comprises 243 residues: Lipid II isoglutaminyl synthase (glutamine-hydrolyzing) subunit GatD (243 aa).

Residues 6-197 (IYHFMSDKLN…LHGPILPKNY (192 aa)) form the GATase cobBQ-type domain. Cys94 acts as the Nucleophile in catalysis. Arg128 contributes to the substrate binding site. His189 is an active-site residue.

Belongs to the CobB/CobQ family. GatD subfamily. As to quaternary structure, forms a heterodimer with MurT.

It carries out the reaction beta-D-GlcNAc-(1-&gt;4)-Mur2Ac(oyl-L-Ala-gamma-D-Glu-L-Lys-D-Ala-D-Ala)-di-trans,octa-cis-undecaprenyl diphosphate + L-glutamine + ATP + H2O = beta-D-GlcNAc-(1-&gt;4)-Mur2Ac(oyl-L-Ala-D-isoglutaminyl-L-Lys-D-Ala-D-Ala)-di-trans,octa-cis-undecaprenyl diphosphate + L-glutamate + ADP + phosphate + H(+). The catalysed reaction is L-glutamine + H2O = L-glutamate + NH4(+). It functions in the pathway cell wall biogenesis; peptidoglycan biosynthesis. Its function is as follows. The lipid II isoglutaminyl synthase complex catalyzes the formation of alpha-D-isoglutamine in the cell wall lipid II stem peptide. The GatD subunit catalyzes the hydrolysis of glutamine to glutamate and ammonia. The resulting ammonia molecule is channeled to the active site of MurT. This Staphylococcus aureus (strain N315) protein is Lipid II isoglutaminyl synthase (glutamine-hydrolyzing) subunit GatD.